The chain runs to 480 residues: Ammonium transporter 3 member 3 (480 aa).

11 helical membrane-spanning segments follow: residues 31–51 (SATL…GSIV), 59–79 (SAFM…VWAY), 135–155 (MVYF…GSLL), 169–189 (LWIT…GFLF), 198–218 (GGYV…YWVG), 233–253 (ILLV…FNGG), 265–287 (AVLN…DVFF), 292–314 (SVIG…AGLV), 318–337 (AAIV…MMVL), 361–381 (GFLG…SLFL), and 407–427 (LFVT…ISLI).

The protein belongs to the ammonia transporter channel (TC 1.A.11.2) family.

Its subcellular location is the membrane. In terms of biological role, involved in ammonium transport. This is Ammonium transporter 3 member 3 (AMT3-3) from Oryza sativa subsp. japonica (Rice).